The chain runs to 410 residues: Trans-splicing factor Raa2, chloroplastic (410 aa).

Disordered stretches follow at residues 1–40 (MRTR…QRPA) and 56–106 (AADH…QQQV). A chloroplast-targeting transit peptide spans 1–46 (MRTRAGAFFGKQRSTSPSGSSTSASRQWLRSSPGRTQRPAAHRVLA). Residues 14 to 25 (STSPSGSSTSAS) show a composition bias toward low complexity. A compositionally biased stretch (polar residues) spans 26-35 (RQWLRSSPGR). The segment covering 96–106 (RQAQRRQQQQV) has biased composition (low complexity).

The protein belongs to the pseudouridine synthase TruB family. In terms of assembly, possibly associated with other factors required for trans-splicing.

The protein localises to the plastid. It is found in the chloroplast. Its function is as follows. Required for trans-splicing of exons 2 and 3 of the chloroplast encoded psaA mRNA (a group II intron). It is not known if this protein has pseudouridine activity; mutation of the potential active site residue does not cause loss of trans-splicing. The sequence is that of Trans-splicing factor Raa2, chloroplastic (RAA2) from Chlamydomonas reinhardtii (Chlamydomonas smithii).